We begin with the raw amino-acid sequence, 804 residues long: Mechanosensitive cation channel TMEM63A (804 aa).

The Extracellular segment spans residues 1-51 (MTSSPFLDPWPSKAVFVRERLGLGERPNDSYCYNSAKNSTVLQGVTFGGIP). Residue Asn-38 is glycosylated (N-linked (GlcNAc...) asparagine). A helical membrane pass occupies residues 52–74 (TVLLLDVSCFLFLILVFSIIRRR). The Cytoplasmic portion of the chain corresponds to 75–133 (FWDYGRIALVSEAGSEARFQRLSSSSSGQQDFENELGCCPWLTAIFRLHDDQILEWCGE). A helical membrane pass occupies residues 134–166 (DAIHYLSFQRHIIFLLVVISFLSLCVILPVNLS). Residues 167 to 190 (GDLLGKDPYSFGRTTIANLQTDND) lie on the Extracellular side of the membrane. The chain crosses the membrane as a helical span at residues 191-216 (LLWLHTVFSVIYLFLTVGFMWHHTRS). Residues 217–415 (IRYKEESLVR…CWKNLSIQGV (199 aa)) lie on the Cytoplasmic side of the membrane. The tract at residues 218-413 (RYKEESLVRQ…DICWKNLSIQ (196 aa)) is intracellular linker IL2; confers mechanosensitivity. The chain crosses the membrane as a helical span at residues 416 to 443 (RWWLQWLGINFSLFVVLFFLTTPSIIMS). At 444-461 (TMDKFNVTKPIHALNNPV) the chain is on the extracellular side. N-linked (GlcNAc...) asparagine glycosylation occurs at Asn-449. A helical membrane pass occupies residues 462 to 489 (ISQFFPTLLLWSFSALLPSIVYYSTLLE). The Cytoplasmic segment spans residues 490 to 494 (SHWTR). The chain crosses the membrane as a helical span at residues 495 to 531 (SGENRIMVSKVYIFLIFMVLILPSLGLTSLDFFFRWL). The Extracellular segment spans residues 532–553 (FDKTSSETSIRLECVFLPDQGA). A helical transmembrane segment spans residues 554–585 (FFVNYVIASAFIGSGMELLRLPGLILYTFRMI). A gating helix region spans residues 554-585 (FFVNYVIASAFIGSGMELLRLPGLILYTFRMI). Residues 586–605 (MAKTAADRRNVKQNQAFEYE) are Cytoplasmic-facing. The chain crosses the membrane as a helical span at residues 606 to 623 (FGAMYAWMLCVFTVIMAY). Topologically, residues 624–627 (SITC) are extracellular. Residues 628-650 (PIIVPFGLIYILLKHMVDRHNLY) traverse the membrane as a helical segment. Residues 651–660 (FAYLPAKLEK) are Cytoplasmic-facing. Residues 661–688 (RIHFAAVNQALAAPILCLFWLFFFSFLR) traverse the membrane as a helical segment. Residues 689–693 (LGLTA) lie on the Extracellular side of the membrane. Residues 694–708 (PATLFTFLVVLLTIL) form a helical membrane-spanning segment. At 709-804 (ACLLYTCFGC…GTAAYAYQES (96 aa)) the chain is on the cytoplasmic side. Ser-738 is subject to Phosphoserine.

It belongs to the CSC1 (TC 1.A.17) family. Monomer. Post-translationally, N-Glycosylated.

The protein resides in the lysosome membrane. Its subcellular location is the early endosome membrane. It localises to the cell membrane. It carries out the reaction Ca(2+)(in) = Ca(2+)(out). Mechanosensitive cation channel with low conductance and high activation threshold. In contrast to TMEM63B, does not show phospholipid scramblase activity. Acts as a regulator of lysosomal morphology by mediating lysosomal mechanosensitivity. Important for the baby's first breath and respiration throughout life. Upon lung inflation conducts cation currents in alveolar type 1 and 2 cells triggering lamellar body exocytosis and surfactant secretion into airspace. Also acts as an osmosensitive cation channel preferentially activated by hypotonic stress. In Mus musculus (Mouse), this protein is Mechanosensitive cation channel TMEM63A.